We begin with the raw amino-acid sequence, 108 residues long: Protein FMC1 homolog (108 aa).

This sequence belongs to the FMC1 family.

The protein is Protein FMC1 homolog of Caenorhabditis elegans.